A 200-amino-acid polypeptide reads, in one-letter code: MLAFCRSSLKSKKYFIILLALAAIAGLGTHAAWSSNGLPRIDNKTLARLAQQHPVVVLFRHAERCDRSTNQCLSDITGITVKGTQDARELGNAFSADIPDFDLYSSNTVRTIQSATWFSAGKKLTVDKRFLQCGNDIYSAIKDLQSKAPDKNIVIFTHNHCLTYIAKDKRDATFKPDYLNGLVMHVEKGKVYLDGEFVNH.

Residues 1 to 25 (MLAFCRSSLKSKKYFIILLALAAIA) form the signal peptide.

The protein belongs to the phosphoglycerate mutase family. Ais subfamily.

The protein localises to the periplasm. It participates in bacterial outer membrane biogenesis; lipopolysaccharide metabolism. Catalyzes the dephosphorylation of heptose(II) of the outer membrane lipopolysaccharide core. The chain is Lipopolysaccharide core heptose(II)-phosphate phosphatase from Escherichia coli O9:H4 (strain HS).